The following is a 122-amino-acid chain: Large ribosomal subunit protein uL14 (122 aa).

It belongs to the universal ribosomal protein uL14 family. In terms of assembly, part of the 50S ribosomal subunit. Forms a cluster with proteins L3 and L19. In the 70S ribosome, L14 and L19 interact and together make contacts with the 16S rRNA in bridges B5 and B8.

Its function is as follows. Binds to 23S rRNA. Forms part of two intersubunit bridges in the 70S ribosome. The chain is Large ribosomal subunit protein uL14 from Clostridioides difficile (strain 630) (Peptoclostridium difficile).